The following is a 552-amino-acid chain: Urocanate hydratase (552 aa).

Residues 49–50 (GG), Gln127, 173–175 (GMG), Asp193, 239–240 (NA), 260–264 (QTSAH), 270–271 (YI), and Tyr319 contribute to the NAD(+) site. Cys407 is a catalytic residue. Residue Gly489 coordinates NAD(+).

It belongs to the urocanase family. The cofactor is NAD(+).

The protein resides in the cytoplasm. It carries out the reaction 4-imidazolone-5-propanoate = trans-urocanate + H2O. The protein operates within amino-acid degradation; L-histidine degradation into L-glutamate; N-formimidoyl-L-glutamate from L-histidine: step 2/3. In terms of biological role, catalyzes the conversion of urocanate to 4-imidazolone-5-propionate. In Bacillus mycoides (strain KBAB4) (Bacillus weihenstephanensis), this protein is Urocanate hydratase.